The sequence spans 482 residues: UDP-N-acetylmuramoyl-L-alanyl-D-glutamate--2,6-diaminopimelate ligase 1 (482 aa).

Ser-30 lines the UDP-N-acetyl-alpha-D-muramoyl-L-alanyl-D-glutamate pocket. 110–116 (GTNGKTT) is an ATP binding site. Residues 152-153 (TT), Ser-179, and Arg-187 each bind UDP-N-acetyl-alpha-D-muramoyl-L-alanyl-D-glutamate. Lys-219 bears the N6-carboxylysine mark. Meso-2,6-diaminopimelate contacts are provided by residues Arg-378, 402–405 (DNPR), Gly-452, and Glu-456. The Meso-diaminopimelate recognition motif signature appears at 402–405 (DNPR).

Belongs to the MurCDEF family. MurE subfamily. Requires Mg(2+) as cofactor. Post-translationally, carboxylation is probably crucial for Mg(2+) binding and, consequently, for the gamma-phosphate positioning of ATP.

The protein localises to the cytoplasm. The catalysed reaction is UDP-N-acetyl-alpha-D-muramoyl-L-alanyl-D-glutamate + meso-2,6-diaminopimelate + ATP = UDP-N-acetyl-alpha-D-muramoyl-L-alanyl-gamma-D-glutamyl-meso-2,6-diaminopimelate + ADP + phosphate + H(+). It functions in the pathway cell wall biogenesis; peptidoglycan biosynthesis. Catalyzes the addition of meso-diaminopimelic acid to the nucleotide precursor UDP-N-acetylmuramoyl-L-alanyl-D-glutamate (UMAG) in the biosynthesis of bacterial cell-wall peptidoglycan. This Clostridium acetobutylicum (strain ATCC 824 / DSM 792 / JCM 1419 / IAM 19013 / LMG 5710 / NBRC 13948 / NRRL B-527 / VKM B-1787 / 2291 / W) protein is UDP-N-acetylmuramoyl-L-alanyl-D-glutamate--2,6-diaminopimelate ligase 1.